A 339-amino-acid chain; its full sequence is D-erythrose-4-phosphate dehydrogenase (339 aa).

NAD(+) contacts are provided by residues 12 to 13 (RI) and R81. Residues 154–156 (SCT), R200, 213–214 (TR), and R236 contribute to the substrate site. The Nucleophile role is filled by C155. N318 provides a ligand contact to NAD(+).

It belongs to the glyceraldehyde-3-phosphate dehydrogenase family. Epd subfamily. In terms of assembly, homotetramer.

It is found in the cytoplasm. It carries out the reaction D-erythrose 4-phosphate + NAD(+) + H2O = 4-phospho-D-erythronate + NADH + 2 H(+). The protein operates within cofactor biosynthesis; pyridoxine 5'-phosphate biosynthesis; pyridoxine 5'-phosphate from D-erythrose 4-phosphate: step 1/5. In terms of biological role, catalyzes the NAD-dependent conversion of D-erythrose 4-phosphate to 4-phosphoerythronate. This is D-erythrose-4-phosphate dehydrogenase from Cronobacter sakazakii (strain ATCC BAA-894) (Enterobacter sakazakii).